Consider the following 174-residue polypeptide: Single-stranded DNA-binding protein 1 (174 aa).

The 106-residue stretch at 6 to 111 (VNKVILVGNL…VVVNVGGTMQ (106 aa)) folds into the SSB domain. Residues 55-61 (WHRVVLF) mediate DNA binding. The disordered stretch occupies residues 110 to 174 (MQMLGGRQGG…PMDFDDDIPF (65 aa)). Over residues 115–133 (GRQGGGAPAGGGQQQGGWG) the composition is skewed to gly residues. Over residues 134 to 160 (QPQQPQGGNQFSGGAQSRPQQQAPAAP) the composition is skewed to low complexity. Positions 169-174 (DDDIPF) match the Important for interaction with partner proteins motif.

Homotetramer. Binds PriA via its C-terminus.

Functionally, plays an important role in DNA replication, recombination and repair. Binds to ssDNA and to an array of partner proteins to recruit them to their sites of action during DNA metabolism. Stimulates the ATPase activity of PriA. One tetramer binds to 26 nucleotides (nt) of ssDNA, a 55 nt piece of ssDNA probably binds 2 tetramers. The polypeptide is Single-stranded DNA-binding protein 1 (Klebsiella pneumoniae subsp. pneumoniae (strain ATCC 700721 / MGH 78578)).